The primary structure comprises 432 residues: Glycerophosphocholine acyltransferase 1 (432 aa).

At 1–110 (MYKLDNNDID…DSIFFKNSSR (110 aa)) the chain is on the cytoplasmic side. Residue serine 78 is modified to Phosphoserine. The chain crosses the membrane as a helical span at residues 111–131 (LEKAFYPFTLFNIFFIGFLMG). Residue arginine 132 is a topological domain, lumenal. A helical transmembrane segment spans residues 133-153 (FPEWFHVYYTILFFVLMPIRF). Residues 154-162 (YTYYKTKNH) lie on the Cytoplasmic side of the membrane. Residues 163–183 (YFLADFCYFVNMLCLLFIWIF) traverse the membrane as a helical segment. Residues 184-187 (PYSY) lie on the Lumenal side of the membrane. The chain crosses the membrane as a helical span at residues 188–208 (SLFQSCFAFTFGTLCFAVITW). Residues 209 to 221 (RNSLVIHSIDKTT) lie on the Cytoplasmic side of the membrane. Residues 222-242 (SCFIHIIPPCVMYVIYHGLPL) form a helical membrane-spanning segment. Residues 243 to 263 (EYKIERFPGAIIQSELDIKKN) are Lumenal-facing. A helical transmembrane segment spans residues 264–284 (ILWTSLYYLVWQSLYHYFITL). The Cytoplasmic segment spans residues 285–318 (KKSSKIKSGERMTSFEYLTTHQFKNFWAVKLRSP). A helical transmembrane segment spans residues 319 to 339 (WPMIIYTLSQYFYQLFTMLLC). The Lumenal portion of the chain corresponds to 340-346 (GIWIRYK). Residues 347–369 (LAAALFLTIVFLWASHNGATYYI) traverse the membrane as a helical segment. Residues 370–432 (DHYGKNFEKE…DSSSVSSKSD (63 aa)) are Cytoplasmic-facing. The tract at residues 413 to 432 (LNVNRDEDFDDSSSVSSKSD) is disordered.

This sequence belongs to the GPC1 family.

It is found in the membrane. The catalysed reaction is sn-glycerol 3-phosphocholine + an acyl-CoA = a 1-acyl-sn-glycero-3-phosphocholine + CoA. It catalyses the reaction sn-glycero-3-phosphoethanolamine + an acyl-CoA = a monoacyl-sn-glycero-3-phosphoethanolamine + CoA. It carries out the reaction sn-glycero-3-phosphoethanolamine + (9Z)-octadecenoyl-CoA = (9Z-octadecenoyl)-sn-glycero-3-phosphoethanolamine + CoA. The enzyme catalyses sn-glycerol 3-phosphocholine + hexadecanoyl-CoA = hexadecanoyl-sn-glycero-3-phosphocholine + CoA. The catalysed reaction is (9Z,12Z)-octadecadienoyl-CoA + sn-glycerol 3-phosphocholine = (9Z,12Z-octadecadienoyl)-sn-glycero-3-phosphocholine + CoA. It catalyses the reaction (12R)-hydroxy-(9Z)-octadecenoyl-CoA + sn-glycerol 3-phosphocholine = (12R-hydroxy-9Z-octadecenoyl)-sn-glycero-3-phosphocholine + CoA. It carries out the reaction (9Z,12Z,15Z)-octadecatrienoyl-CoA + sn-glycerol 3-phosphocholine = (9Z,12Z,15Z-octadecatrienoyl)-sn-glycero-3-phosphocholine + CoA. The enzyme catalyses sn-glycerol 3-phosphocholine + (9Z)-octadecenoyl-CoA = (9Z-octadecenoyl)-sn-glycero-3-phosphocholine + CoA. The catalysed reaction is 1-(9Z-octadecenoyl)-sn-glycero-3-phosphoethanolamine + sn-glycerol 3-phosphocholine = (9Z-octadecenoyl)-sn-glycero-3-phosphocholine + sn-glycero-3-phosphoethanolamine. With respect to regulation, the GPCAT activity is sensitive to N-ethylmaleimide, phenanthroline, and divalent cations including Ca(2+), Mg(2+), Mn(2+) and Zn(2+). The activity is also inhibited by glycerol-3-phosphate (G3P). Its function is as follows. Glycerophosphocholine acyltransferase (GPCAT) that utilizes acyl-CoA to acylate glycero-3-phosphocholine (GPC), forming lysophosphatidylcholine (LPC). Shows broad acyl specificities with a preference for 16:0-CoA, polyunsaturated acyl-CoA, and the hydroxylated ricinoleoyl-CoA. Also catalyzes the acylation of glycero-3-phosphoethanolamine (GPE) with acyl-CoA. In addition to acyl-CoA, GPCAT efficiently utilizes LPC and lysophosphatidylethanolamine (LPE) as acyl donors in the acylation of GPC. Contributes to the maintenance of phosphatidylcholine (PC) homeostasis and might also have specific functions in acyl editing of PC, such as transferring acyl groups modified at the sn-2 position of PC to the sn-1. Involved in postsynthetic PC remodeling that produces more saturated PC species. The protein is Glycerophosphocholine acyltransferase 1 of Saccharomyces cerevisiae (strain ATCC 204508 / S288c) (Baker's yeast).